The following is a 37-amino-acid chain: Conotoxin r11e (37 aa).

4 disulfides stabilise this stretch: cysteine 2/cysteine 16, cysteine 9/cysteine 21, cysteine 15/cysteine 26, and cysteine 20/cysteine 33. Residues glutamate 13 and glutamate 14 each carry the 4-carboxyglutamate modification. 6'-bromotryptophan is present on tryptophan 34.

In terms of tissue distribution, expressed by the venom duct.

Its subcellular location is the secreted. Functionally, causes hyperactivity, circular motion, convulsion, urination and death, when injected into 13- to 15-day-old mice. Causes gasping, backward swimming or swimming in a vertical direction and death, when intraperitoneally injected into goldfish. The protein is Conotoxin r11e of Conus radiatus (Rayed cone).